Consider the following 540-residue polypeptide: Bifunctional pantoate ligase/cytidylate kinase (540 aa).

The segment at 1–280 (MQWLRTVAAL…VGQTRLIDNL (280 aa)) is pantoate--beta-alanine ligase. An ATP-binding site is contributed by 28–35 (MGSLHEGH). H35 (proton donor) is an active-site residue. Q59 lines the (R)-pantoate pocket. A beta-alanine-binding site is contributed by Q59. Position 150-153 (150-153 (GQKD)) interacts with ATP. Q156 serves as a coordination point for (R)-pantoate. Residues V179 and 187–190 (YSSR) contribute to the ATP site. The tract at residues 281 to 540 (LLSPEGVDPL…RSGAAHFDII (260 aa)) is cytidylate kinase. The disordered stretch occupies residues 288 to 307 (DPLPQEQQSAVPPSPKRGRR).

The protein in the N-terminal section; belongs to the pantothenate synthetase family. It in the C-terminal section; belongs to the cytidylate kinase family. Type 1 subfamily.

The protein localises to the cytoplasm. It carries out the reaction (R)-pantoate + beta-alanine + ATP = (R)-pantothenate + AMP + diphosphate + H(+). The catalysed reaction is CMP + ATP = CDP + ADP. It catalyses the reaction dCMP + ATP = dCDP + ADP. It functions in the pathway cofactor biosynthesis; (R)-pantothenate biosynthesis; (R)-pantothenate from (R)-pantoate and beta-alanine: step 1/1. Its function is as follows. Catalyzes the condensation of pantoate with beta-alanine in an ATP-dependent reaction via a pantoyl-adenylate intermediate. In terms of biological role, catalyzes the transfer of a phosphate group from ATP to either CMP or dCMP to form CDP or dCDP and ADP, respectively. The sequence is that of Bifunctional pantoate ligase/cytidylate kinase from Synechococcus sp. (strain JA-3-3Ab) (Cyanobacteria bacterium Yellowstone A-Prime).